The sequence spans 147 residues: Ribonuclease H (147 aa).

The RNase H type-1 domain maps to 1–142 (MTEIVEIFTD…ADALARSAIT (142 aa)). Mg(2+) is bound by residues Asp-10, Glu-48, Asp-70, and Asp-134.

This sequence belongs to the RNase H family. In terms of assembly, monomer. It depends on Mg(2+) as a cofactor.

Its subcellular location is the cytoplasm. The enzyme catalyses Endonucleolytic cleavage to 5'-phosphomonoester.. In terms of biological role, endonuclease that specifically degrades the RNA of RNA-DNA hybrids. The sequence is that of Ribonuclease H from Nitrosococcus oceani (strain ATCC 19707 / BCRC 17464 / JCM 30415 / NCIMB 11848 / C-107).